A 202-amino-acid polypeptide reads, in one-letter code: Imidazoleglycerol-phosphate dehydratase (202 aa).

It belongs to the imidazoleglycerol-phosphate dehydratase family.

The protein resides in the cytoplasm. It carries out the reaction D-erythro-1-(imidazol-4-yl)glycerol 3-phosphate = 3-(imidazol-4-yl)-2-oxopropyl phosphate + H2O. It participates in amino-acid biosynthesis; L-histidine biosynthesis; L-histidine from 5-phospho-alpha-D-ribose 1-diphosphate: step 6/9. This Clavibacter michiganensis subsp. michiganensis (strain NCPPB 382) protein is Imidazoleglycerol-phosphate dehydratase.